A 357-amino-acid polypeptide reads, in one-letter code: Glutamine synthetase cytosolic isozyme (357 aa).

A GS beta-grasp domain is found at 20 to 100 (VIAEYIWIGG…VICDAYSPNG (81 aa)). Positions 107–357 (KRAAAAKIFN…IAETTILWKP (251 aa)) constitute a GS catalytic domain.

This sequence belongs to the glutamine synthetase family. As to quaternary structure, homooctamer.

It localises to the cytoplasm. It catalyses the reaction L-glutamate + NH4(+) + ATP = L-glutamine + ADP + phosphate + H(+). This chain is Glutamine synthetase cytosolic isozyme, found in Pinus sylvestris (Scotch pine).